The following is a 187-amino-acid chain: Ribosome-recycling factor (187 aa).

This sequence belongs to the RRF family.

Its subcellular location is the cytoplasm. Its function is as follows. Responsible for the release of ribosomes from messenger RNA at the termination of protein biosynthesis. May increase the efficiency of translation by recycling ribosomes from one round of translation to another. The chain is Ribosome-recycling factor from Rhodopseudomonas palustris (strain BisB18).